The following is a 633-amino-acid chain: Chitinase 2 (633 aa).

The region spanning 151-602 (PKLSAYITDW…NAAREGLGYV (452 aa)) is the GH18 domain. Residues 275 to 276 (QN) and 306 to 309 (GGWS) contribute to the chitin site. Glutamate 349 serves as the catalytic Proton donor. Chitin-binding positions include tyrosine 350, 422-425 (MSYD), and tryptophan 582.

This sequence belongs to the glycosyl hydrolase 18 family. In terms of assembly, semipurified toxin complex consists of at least YenA1-YenA2-YenB-YenC1-YenC2-Chi1-Chi2. The Yen-TC:K9 subcomplex is about 26 nm tall and 22 nm in diameter with 5-fold symmetry and 5 copies of YenA1, YenA2, Chi1 and Chi2; the chitinase subunits may be solvent accessible on the exterior the complex. The Yen-TC:K9 subcomplex has no insecticidal activity. The native complex with additional YenB, YenC1 and YenC2 subunits is 16 nm taller and is insecticidal; the toxicity-conferring subunits are present at about 1 copy each.

It is found in the secreted. The enzyme catalyses Random endo-hydrolysis of N-acetyl-beta-D-glucosaminide (1-&gt;4)-beta-linkages in chitin and chitodextrins.. Toxin complex is secreted when grown at 25 degrees Celsius or less; at higher temperatures the proteins are present intracellularly but not secreted. Its function is as follows. Part of an orally active toxin complex (TC) with strong insecticidal effects on larvae of the Coleoptera Costelytra zealandica, Acrossidius tasmania and Adoryphorus couloni and some Lepidoptera larvae. The TC has an endochitinase activity. This subunit might aid infection by degradation of the larval peritrophic membrane. The protein is Chitinase 2 of Yersinia entomophaga.